Here is a 584-residue protein sequence, read N- to C-terminus: Transcription factor 7-like 1 (584 aa).

Positions 1–28 are enriched in gly residues; it reads MPQLGGGRGGAGGGGGGSGAGATSGGDD. The CTNNB1-binding stretch occupies residues 1-71; the sequence is MPQLGGGRGG…VKSSLVNESE (71 aa). Disordered stretches follow at residues 1-99, 159-179, and 194-231; these read MPQL…RDYF, ATVKDTRSPSPAHLSNKVPVV, and YSNDHFSPASPPTHLSPEIDPKTGIPRPPHPSELSPYY. Over residues 64–78 the composition is skewed to low complexity; the sequence is SSLVNESENQSSSSD. The span at 80–99 shows a compositional bias: basic and acidic residues; it reads EAERRPQPARDAFQKPRDYF. Positions 342–410 form a DNA-binding region, HMG box; that stretch reads VKKPLNAFML…LHAQLYPTWS (69 aa). The tract at residues 412 to 501 is disordered; it reads RDNYGKKKKR…HSEQAQPLSL (90 aa). The Nuclear localization signal signature appears at 417-423; it reads KKKKRKR. Low complexity-rich tracts occupy residues 427–437 and 470–491; these read LSQTQSQQQIQ and SALDSPATPSAALASPAAPAAT. The span at 492-501 shows a compositional bias: polar residues; the sequence is HSEQAQPLSL.

This sequence belongs to the TCF/LEF family. In terms of assembly, binds the armadillo repeat of CTNNB1 and forms a stable complex. Interacts with DAZAP2. As to expression, detected in the basal layer of epidermis and in outer root sheath and bulge of hair follicles.

The protein resides in the nucleus. In terms of biological role, participates in the Wnt signaling pathway. Binds to DNA and acts as a repressor in the absence of CTNNB1, and as an activator in its presence. Necessary for the terminal differentiation of epidermal cells, the formation of keratohyalin granules and the development of the barrier function of the epidermis. In Mus musculus (Mouse), this protein is Transcription factor 7-like 1 (Tcf7l1).